Consider the following 228-residue polypeptide: Octanoyltransferase (228 aa).

Residues 32 to 214 (DVVPDTVLLV…HLRRLFERDW (183 aa)) enclose the BPL/LPL catalytic domain. Substrate is bound by residues 77-84 (RGGDVTYH), 144-146 (SVG), and 157-159 (GIA). Cys175 acts as the Acyl-thioester intermediate in catalysis.

This sequence belongs to the LipB family.

It localises to the cytoplasm. The enzyme catalyses octanoyl-[ACP] + L-lysyl-[protein] = N(6)-octanoyl-L-lysyl-[protein] + holo-[ACP] + H(+). Its pathway is protein modification; protein lipoylation via endogenous pathway; protein N(6)-(lipoyl)lysine from octanoyl-[acyl-carrier-protein]: step 1/2. Catalyzes the transfer of endogenously produced octanoic acid from octanoyl-acyl-carrier-protein onto the lipoyl domains of lipoate-dependent enzymes. Lipoyl-ACP can also act as a substrate although octanoyl-ACP is likely to be the physiological substrate. This Syntrophobacter fumaroxidans (strain DSM 10017 / MPOB) protein is Octanoyltransferase.